The sequence spans 1037 residues: Huntingtin-interacting protein 1 (1037 aa).

An ENTH domain is found at 32-160 (ERESFERTQT…EYHTKNPRFP (129 aa)). Serine 338 carries the post-translational modification Phosphoserine. Residues 368-644 (VNKDEKDHLI…IQDALNQLEE (277 aa)) are a coiled coil. The tract at residues 410-491 (SELEADLAEQ…HADLLRKNAE (82 aa)) is pDED. One can recognise an I/LWEQ domain in the interval 771-1012 (GLDIKQEELG…ELRKKHYELA (242 aa)). Residues 867–924 (RWTEGLISASKAVGWGATVMVDAADLVVQGRGKFEELMVCSHEIAASTAQLVAASKVK) form an important for actin binding region. Positions 1017–1037 (GWEEGTEASPPTLQEVVTEKE) are disordered.

The protein belongs to the SLA2 family. Homodimer. Binds actin. Binds HTT (via N-terminus). This interaction is restricted to the brain. Binds to IFT57. In normal conditions, it poorly interacts with IFT57, HIP1 being strongly associated with HTT. However, in mutant HTT proteins with a long poly-Gln region, interaction between HTT and HIP1 is inhibited, promoting the interaction between HIP1 and IFT57. Interacts with CLTB (via N-terminus). Interacts (via coiled coil domain) with AR. Interacts with AP2A1, AP2A2, CLTC and HIP1R. Interacts with GRIA1, GRIN2A and GRIN2B. In terms of tissue distribution, ubiquitously expressed with the highest level in brain. Expression is up-regulated in prostate and colon cancer.

Its subcellular location is the cytoplasm. It is found in the nucleus. It localises to the endomembrane system. The protein localises to the cytoplasmic vesicle. The protein resides in the clathrin-coated vesicle membrane. Functionally, plays a role in clathrin-mediated endocytosis and trafficking. Involved in regulating AMPA receptor trafficking in the central nervous system in an NMDA-dependent manner. Regulates presynaptic nerve terminal activity. Enhances androgen receptor (AR)-mediated transcription. May act as a proapoptotic protein that induces cell death by acting through the intrinsic apoptosis pathway. Binds 3-phosphoinositides (via ENTH domain). May act through the ENTH domain to promote cell survival by stabilizing receptor tyrosine kinases following ligand-induced endocytosis. May play a functional role in the cell filament networks. May be required for differentiation, proliferation, and/or survival of somatic and germline progenitors. The polypeptide is Huntingtin-interacting protein 1 (HIP1) (Homo sapiens (Human)).